Consider the following 160-residue polypeptide: Nucleotide-binding protein Ping_2261 (160 aa).

Belongs to the YajQ family.

Its function is as follows. Nucleotide-binding protein. This is Nucleotide-binding protein Ping_2261 from Psychromonas ingrahamii (strain DSM 17664 / CCUG 51855 / 37).